A 429-amino-acid polypeptide reads, in one-letter code: Serine--tRNA ligase (429 aa).

236–238 (TAE) contacts L-serine. 267–269 (RRE) is an ATP binding site. Position 290 (E290) interacts with L-serine. ATP is bound at residue 354–357 (EISS). An L-serine-binding site is contributed by S390.

It belongs to the class-II aminoacyl-tRNA synthetase family. Type-1 seryl-tRNA synthetase subfamily. In terms of assembly, homodimer. The tRNA molecule binds across the dimer.

Its subcellular location is the cytoplasm. The catalysed reaction is tRNA(Ser) + L-serine + ATP = L-seryl-tRNA(Ser) + AMP + diphosphate + H(+). The enzyme catalyses tRNA(Sec) + L-serine + ATP = L-seryl-tRNA(Sec) + AMP + diphosphate + H(+). It participates in aminoacyl-tRNA biosynthesis; selenocysteinyl-tRNA(Sec) biosynthesis; L-seryl-tRNA(Sec) from L-serine and tRNA(Sec): step 1/1. Its function is as follows. Catalyzes the attachment of serine to tRNA(Ser). Is also able to aminoacylate tRNA(Sec) with serine, to form the misacylated tRNA L-seryl-tRNA(Sec), which will be further converted into selenocysteinyl-tRNA(Sec). The polypeptide is Serine--tRNA ligase (Gloeobacter violaceus (strain ATCC 29082 / PCC 7421)).